A 1703-amino-acid chain; its full sequence is Arf-GAP with Rho-GAP domain, ANK repeat and PH domain-containing protein 2 (1703 aa).

One can recognise an SAM domain in the interval 6–70; that stretch reads EVNADIRDFL…LKQLQMIFSK (65 aa). Tyr77 carries the post-translational modification Phosphotyrosine. 3 disordered regions span residues 84-132, 191-232, and 286-319; these read KNGS…LSEG, EEHT…NGTN, and PVPE…LTLK. Composition is skewed to polar residues over residues 85-103, 123-132, and 197-214; these read NGST…STHT, MVTTSTLSEG, and GNLT…NTEC. Residues 222 to 232 are compositionally biased toward low complexity; it reads TSGTHSGNGTN. Residues 308–319 are compositionally biased toward polar residues; the sequence is NTTSAGKSLTLK. 2 PH domains span residues 480–572 and 585–677; these read AKEK…SALK and APEK…QSIA. One can recognise an Arf-GAP domain in the interval 674–809; sequence QSIAETLSDY…TLLASLTKEE (136 aa). The C4-type zinc finger occupies 698 to 721; the sequence is CADCKAPDPDWASINLCVVICKKC. 2 PH domains span residues 899–1001 and 1012–1110; these read QTAA…KRFV and DYDL…KAAG. Residues 1114–1295 form the Rho-GAP domain; sequence NALQDQQLCK…DLINNYVEIF (182 aa). The Ras-associating domain occupies 1324-1418; it reads GDLLIEVFVE…AYLVVKRFLT (95 aa). Residues 1428–1531 form the PH 5 domain; the sequence is KSIKEGILKL…WMASIFIAQH (104 aa). At Ser1627 the chain carries Phosphoserine. Disordered regions lie at residues 1633 to 1670 and 1684 to 1703; these read DTEA…DPKL and RSRP…KEVK. 2 stretches are compositionally biased toward basic and acidic residues: residues 1653–1670 and 1688–1703; these read KKTE…DPKL and LHKE…KEVK.

Its subcellular location is the cytoplasm. Phosphatidylinositol 3,4,5-trisphosphate-dependent GTPase-activating protein that modulates actin cytoskeleton remodeling by regulating ARF and RHO family members. Is activated by phosphatidylinositol 3,4,5-trisphosphate (PtdIns(3,4,5)P3) binding. Can be activated by phosphatidylinositol 3,4-bisphosphate (PtdIns(3,4,5)P2) binding, albeit with lower efficiency. In Mus musculus (Mouse), this protein is Arf-GAP with Rho-GAP domain, ANK repeat and PH domain-containing protein 2 (Arap2).